Here is a 387-residue protein sequence, read N- to C-terminus: F-box protein DOR (387 aa).

Positions 19–64 (DENFEPIPIDLVIEIFSRSPVKSIARCRCVSKLWASILRLPYFTEL) constitute an F-box domain.

In terms of assembly, part of a SCF (ASK-cullin-F-box) protein ligase complex. Interacts with ASK14 and CUL1. As to expression, strongly expressed in guard cells. Mostly represented in seedlings, leaves and flowers, and, to a lower extent, in roots and siliques.

Its pathway is protein modification; protein ubiquitination. In terms of biological role, component of SCF(ASK-cullin-F-box) E3 ubiquitin ligase complexes, which may mediate the ubiquitination and subsequent proteasomal degradation of target proteins. Negative regulator of guard cell abscisic acid (ABA) signaling, especially during drought stress. This is F-box protein DOR (DOR) from Arabidopsis thaliana (Mouse-ear cress).